A 292-amino-acid polypeptide reads, in one-letter code: ATP synthase gamma chain (292 aa).

The protein belongs to the ATPase gamma chain family. F-type ATPases have 2 components, CF(1) - the catalytic core - and CF(0) - the membrane proton channel. CF(1) has five subunits: alpha(3), beta(3), gamma(1), delta(1), epsilon(1). CF(0) has three main subunits: a, b and c.

It localises to the cell inner membrane. Its function is as follows. Produces ATP from ADP in the presence of a proton gradient across the membrane. The gamma chain is believed to be important in regulating ATPase activity and the flow of protons through the CF(0) complex. In Methylobacterium sp. (strain 4-46), this protein is ATP synthase gamma chain.